A 299-amino-acid polypeptide reads, in one-letter code: UDP-N-acetylenolpyruvoylglucosamine reductase (299 aa).

Positions arginine 21–glycine 189 constitute an FAD-binding PCMH-type domain. Arginine 168 is a catalytic residue. Catalysis depends on serine 219, which acts as the Proton donor. The active site involves glutamate 289.

Belongs to the MurB family. It depends on FAD as a cofactor.

The protein localises to the cytoplasm. The catalysed reaction is UDP-N-acetyl-alpha-D-muramate + NADP(+) = UDP-N-acetyl-3-O-(1-carboxyvinyl)-alpha-D-glucosamine + NADPH + H(+). It functions in the pathway cell wall biogenesis; peptidoglycan biosynthesis. Functionally, cell wall formation. The polypeptide is UDP-N-acetylenolpyruvoylglucosamine reductase (Parasynechococcus marenigrum (strain WH8102)).